The primary structure comprises 194 residues: Fibroblast growth factor 7 (194 aa).

A signal peptide spans 1 to 31 (MRKWILTWILPSLLYRSCFHIICLVGTISLA). A glycan (N-linked (GlcNAc...) asparagine) is linked at Asn45.

The protein belongs to the heparin-binding growth factors family. Interacts with FGFBP1. Interacts with FGFR2. Affinity between fibroblast growth factors (FGFs) and their receptors is increased by heparan sulfate glycosaminoglycans that function as coreceptors.

It localises to the secreted. Plays an important role in the regulation of embryonic development, cell proliferation and cell differentiation. Required for normal branching morphogenesis. Growth factor active on keratinocytes. Possible major paracrine effector of normal epithelial cell proliferation. In Cervus elaphus (Red deer), this protein is Fibroblast growth factor 7 (FGF7).